The chain runs to 557 residues: Ribonuclease J 2 (557 aa).

Zn(2+) contacts are provided by H76, H78, H144, and E166. A substrate-binding site is contributed by H366–H370.

It belongs to the metallo-beta-lactamase superfamily. RNA-metabolizing metallo-beta-lactamase-like family. Bacterial RNase J subfamily. Homodimer, may be a subunit of the RNA degradosome. Zn(2+) is required as a cofactor.

The protein resides in the cytoplasm. Its function is as follows. An RNase that has 5'-3' exonuclease and possibly endoonuclease activity. Involved in maturation of rRNA and in some organisms also mRNA maturation and/or decay. The polypeptide is Ribonuclease J 2 (Staphylococcus epidermidis (strain ATCC 35984 / DSM 28319 / BCRC 17069 / CCUG 31568 / BM 3577 / RP62A)).